Consider the following 296-residue polypeptide: NAD kinase (296 aa).

Aspartate 78 (proton acceptor) is an active-site residue. Residues 78-79, 152-153, arginine 180, aspartate 182, and glutamine 251 contribute to the NAD(+) site; these read DG and ND.

Belongs to the NAD kinase family. A divalent metal cation is required as a cofactor.

It is found in the cytoplasm. It catalyses the reaction NAD(+) + ATP = ADP + NADP(+) + H(+). In terms of biological role, involved in the regulation of the intracellular balance of NAD and NADP, and is a key enzyme in the biosynthesis of NADP. Catalyzes specifically the phosphorylation on 2'-hydroxyl of the adenosine moiety of NAD to yield NADP. The sequence is that of NAD kinase from Neisseria gonorrhoeae (strain ATCC 700825 / FA 1090).